Here is a 104-residue protein sequence, read N- to C-terminus: MFSKATLFFTAAVVIVAAGATPTTSQCNTGPVQCCDHTQQASGPTTLTGIGEVDLGDTSTLIAYGNCSPVLPVLGGPKCQGQTVCCDNTEFEGLVNVGCTNVAV.

An N-terminal signal peptide occupies residues 1–25 (MFSKATLFFTAAVVIVAAGATPTTS). 4 disulfide bridges follow: Cys27/Cys85, Cys34/Cys79, Cys35/Cys67, and Cys86/Cys99.

The protein belongs to the fungal hydrophobin family. In terms of assembly, self-assembles to form functional amyloid fibrils called rodlets. Self-assembly into fibrillar rodlets occurs spontaneously at hydrophobic:hydrophilic interfaces and the rodlets further associate laterally to form amphipathic monolayers.

It localises to the secreted. Its subcellular location is the cell wall. Aerial growth, conidiation, and dispersal of filamentous fungi in the environment rely upon a capability of their secreting small amphipathic proteins called hydrophobins (HPBs) with low sequence identity. Class I can self-assemble into an outermost layer of rodlet bundles on aerial cell surfaces, conferring cellular hydrophobicity that supports fungal growth, development and dispersal; whereas Class II form highly ordered films at water-air interfaces through intermolecular interactions but contribute nothing to the rodlet structure. Hydph12 is a class I hydrophobin involved in the formation of mycelium knots. The protein is Class I hydrophobin 12 of Pleurotus ostreatus (strain PC15) (Oyster mushroom).